The following is a 223-amino-acid chain: Endo-1,4-beta-xylanase 2 (223 aa).

The signal sequence occupies residues 1–19; the sequence is MVSFTSLLAGVAAISGVLA. Residues 20–33 constitute a propeptide that is removed on maturation; the sequence is APAAEVESVAVEKR. Glutamine 34 carries the post-translational modification Pyrrolidone carboxylic acid. A GH11 domain is found at 34–222; that stretch reads QTIQPGTGYN…FSSGSASITV (189 aa). Asparagine 71 and asparagine 94 each carry an N-linked (GlcNAc...) asparagine glycan. Residues tyrosine 106 and tyrosine 110 each coordinate substrate. The Nucleophile role is filled by glutamate 119. Residues tyrosine 121, arginine 155, proline 159, glutamine 169, and tyrosine 204 each contribute to the substrate site. Catalysis depends on glutamate 210, which acts as the Proton donor.

This sequence belongs to the glycosyl hydrolase 11 (cellulase G) family.

The protein resides in the secreted. The enzyme catalyses Endohydrolysis of (1-&gt;4)-beta-D-xylosidic linkages in xylans.. It functions in the pathway glycan degradation; xylan degradation. In terms of biological role, glycoside hydrolase involved in the hydrolysis of xylan, a major plant cell wall hemicellulose made up of 1,4-beta-linked D-xylopyranose residues. Catalyzes the endohydrolysis of the main-chain 1,4-beta-glycosidic bonds connecting the xylose subunits yielding various xylooligosaccharides and xylose. The catalysis proceeds by a double-displacement reaction mechanism with a putative covalent glycosyl-enzyme intermediate, with retention of the anomeric configuration. Produces xylobiose and xylose as the main degradation products. The protein is Endo-1,4-beta-xylanase 2 of Hypocrea jecorina (strain ATCC 56765 / BCRC 32924 / NRRL 11460 / Rut C-30) (Trichoderma reesei).